A 607-amino-acid chain; its full sequence is Siderochrome iron transporter 2 (607 aa).

Positions Met1 to Leu46 are disordered. 13 helical membrane-spanning segments follow: residues Val86–Ile106, Ile129–Trp149, Ala152–Cys172, Ala180–Val200, Ala210–Ala230, Trp242–Phe262, Ile297–Ala317, Ser326–Trp346, Leu367–Phe387, Tyr404–Val424, His432–Phe452, Ile459–Gly479, and Phe499–Tyr519. The N-linked (GlcNAc...) asparagine glycan is linked to Asn538. A helical transmembrane segment spans residues Phe573 to Lys593.

Belongs to the major facilitator superfamily.

Its subcellular location is the cell membrane. In terms of biological role, major facilitator transporter involved in ferrichrome (FC) uptake. The polypeptide is Siderochrome iron transporter 2 (Aspergillus fumigatus (strain ATCC MYA-4609 / CBS 101355 / FGSC A1100 / Af293) (Neosartorya fumigata)).